We begin with the raw amino-acid sequence, 381 residues long: NF-kappa-B inhibitor-like protein 1 (381 aa).

Positions 1 to 34 (MSNPSPQVPEEEASTSVCRPKSSMASTSRRQRRE) are disordered. ANK repeat units follow at residues 64–93 (GQPP…DPAH) and 97–130 (HGDT…AMGI). Disordered regions lie at residues 129–167 (GIKN…EWRQ) and 186–294 (GDAS…RGSL). Residue Ser-150 is modified to Phosphoserine. Residues 150–159 (SAEEEEEDDA) are compositionally biased toward acidic residues. Composition is skewed to basic and acidic residues over residues 218 to 228 (REAEGSRRPPR) and 238 to 287 (QQEE…EHPR).

As to quaternary structure, interacts with CACTIN (via N-terminal domain); the interaction occurs in a proinflammatory-independent manner. Detected in different cell types including monocytes, T-cells, B-cells and hepatocytes.

The protein resides in the nucleus. In terms of biological role, involved in the regulation of innate immune response. Acts as negative regulator of Toll-like receptor and interferon-regulatory factor (IRF) signaling pathways. Contributes to the negative regulation of transcriptional activation of NF-kappa-B target genes in response to endogenous proinflammatory stimuli. The protein is NF-kappa-B inhibitor-like protein 1 (NFKBIL1) of Homo sapiens (Human).